The sequence spans 125 residues: Ribosome-binding factor A (125 aa).

Belongs to the RbfA family. As to quaternary structure, monomer. Binds 30S ribosomal subunits, but not 50S ribosomal subunits or 70S ribosomes.

The protein resides in the cytoplasm. In terms of biological role, one of several proteins that assist in the late maturation steps of the functional core of the 30S ribosomal subunit. Associates with free 30S ribosomal subunits (but not with 30S subunits that are part of 70S ribosomes or polysomes). Required for efficient processing of 16S rRNA. May interact with the 5'-terminal helix region of 16S rRNA. The polypeptide is Ribosome-binding factor A (Thermosipho melanesiensis (strain DSM 12029 / CIP 104789 / BI429)).